The chain runs to 23 residues: Chaperonin GroEL (23 aa).

The protein belongs to the chaperonin (HSP60) family. Forms a cylinder of 14 subunits composed of two heptameric rings stacked back-to-back. Interacts with the co-chaperonin GroES. Phosphorylated on threonine.

It is found in the cytoplasm. It catalyses the reaction ATP + H2O + a folded polypeptide = ADP + phosphate + an unfolded polypeptide.. In terms of biological role, together with its co-chaperonin GroES, plays an essential role in assisting protein folding. The GroEL-GroES system forms a nano-cage that allows encapsulation of the non-native substrate proteins and provides a physical environment optimized to promote and accelerate protein folding. In Acidithiobacillus ferrooxidans (Thiobacillus ferrooxidans), this protein is Chaperonin GroEL.